The following is a 28-amino-acid chain: 50 kDa venom protease (28 aa).

This sequence belongs to the venom metalloproteinase (M12B) family. Requires Zn(2+) as cofactor. Expressed by the venom gland.

Its subcellular location is the secreted. This chain is 50 kDa venom protease, found in Proatheris superciliaris (Lowland swamp viper).